A 210-amino-acid chain; its full sequence is Probable GTP-binding protein EngB (210 aa).

The EngB-type G domain occupies 30–204; it reads QGYEVAFAGR…YKVLAGWMEL (175 aa). Residues 38–45, 64–68, 82–85, 149–152, and 182–185 each bind GTP; these read GRSNAGKS, GRTQL, DLPG, TKAD, and LFSA. Mg(2+) is bound by residues serine 45 and threonine 66.

Belongs to the TRAFAC class TrmE-Era-EngA-EngB-Septin-like GTPase superfamily. EngB GTPase family. The cofactor is Mg(2+).

Functionally, necessary for normal cell division and for the maintenance of normal septation. This Pseudomonas putida (strain W619) protein is Probable GTP-binding protein EngB.